The primary structure comprises 61 residues: Large ribosomal subunit protein uL30 (61 aa).

It belongs to the universal ribosomal protein uL30 family. As to quaternary structure, part of the 50S ribosomal subunit.

This is Large ribosomal subunit protein uL30 from Corynebacterium glutamicum (strain R).